The sequence spans 133 residues: Salivary cystatin-L (133 aa).

The signal sequence occupies residues 1–19; sequence MTSSFALVLLLGGVAVCVA. The region spanning 30–117 is the Cystatin domain; the sequence is ANHQANPEFL…HRTCTTVVFE (88 aa). 2 cysteine pairs are disulfide-bonded: Cys89–Cys100 and Cys111–Cys130.

It belongs to the cystatin family. As to quaternary structure, monomer. Can form homodimers in vitro, but probably not in vivo. Homodimers are predicted to be inactive; dimerization disrupts the interaction with target proteases.

It localises to the secreted. In terms of biological role, inhibitor of cysteine proteinases. Inhibits host immune responses via its inhibition of host cathepsins. Contributes to the suppression of the host's immune response to tick salivary proteins and is important for successful feeding on hosts. Inhibits differentiation of host dendritic cells. Inhibits proliferation of host T-cells in response to antigen stimulus. Down-regulates TLR2-mediated host responses to infection by B.burgdorferi and the production of the chemokine CCL3 by host dendritic cells. Down-regulates host responses to infection by B.burgdorferi and the production of IFNB1 by host dendritic cells. Down-regulates IL1B production by host mast cells, and this then leads to impaired activation of IL1R1, resulting in decreased IL9 production. Inhibits host inflammatory reactions and recruitment of host neutrophils. Inhibits papain and cathepsin L (CTSL) (in vitro). Inhibits cathepsin S (CTSS) (in vitro). Inhibits CTSV and CTSC, but to a lesser degree (in vitro). In Ixodes scapularis (Black-legged tick), this protein is Salivary cystatin-L.